The following is a 126-amino-acid chain: Holo-[acyl-carrier-protein] synthase (126 aa).

Mg(2+)-binding residues include aspartate 9 and glutamate 58.

It belongs to the P-Pant transferase superfamily. AcpS family. The cofactor is Mg(2+).

It localises to the cytoplasm. The enzyme catalyses apo-[ACP] + CoA = holo-[ACP] + adenosine 3',5'-bisphosphate + H(+). In terms of biological role, transfers the 4'-phosphopantetheine moiety from coenzyme A to a Ser of acyl-carrier-protein. This is Holo-[acyl-carrier-protein] synthase from Vibrio vulnificus (strain YJ016).